Consider the following 135-residue polypeptide: Immunity protein RhsIA (135 aa).

Residues 58 to 77 form a disordered region; that stretch reads RKQGRQISLSCGEPPEYSPD.

Its function is as follows. Immunity component of a toxin-immunity protein module, which functions as a cellular contact-dependent growth inhibition (CDI) system. Specifically inhibits its cognate toxin RhsA. Cell contact is necessary for growth inhibition. The polypeptide is Immunity protein RhsIA (rhsIA) (Dickeya dadantii (strain 3937) (Erwinia chrysanthemi (strain 3937))).